The chain runs to 592 residues: Arginine--tRNA ligase (592 aa).

Positions 112–122 (VNPNKELHVGH) match the 'HIGH' region motif.

The protein belongs to the class-I aminoacyl-tRNA synthetase family. Monomer.

It is found in the cytoplasm. It carries out the reaction tRNA(Arg) + L-arginine + ATP = L-arginyl-tRNA(Arg) + AMP + diphosphate. This Thermus thermophilus (strain ATCC 27634 / DSM 579 / HB8) protein is Arginine--tRNA ligase.